The sequence spans 282 residues: Tumor necrosis factor ligand superfamily member 6 (282 aa).

Residues 1-82 (MQQPFNYPYP…KKKRDHNAGL (82 aa)) lie on the Cytoplasmic side of the membrane. Residues 30–73 (FPCPASVPGRPGQRRPPPPPPPPPPPPTLLPSRPLPPLPPPSLK) are disordered. Residues 43 to 71 (RRPPPPPPPPPPPPTLLPSRPLPPLPPPS) show a composition bias toward pro residues. Residues 83-103 (CLLVMFFMVLVALVGLGLGMF) form a helical; Signal-anchor for type II membrane protein membrane-spanning segment. The Extracellular portion of the chain corresponds to 104–282 (QLFHLQKELT…SKTFFGLYKL (179 aa)). Basic and acidic residues predominate over residues 119–132 (ASQRHTESSLEKQI). The tract at residues 119–140 (ASQRHTESSLEKQIGHPNLPSE) is disordered. Positions 146 to 282 (KVAHLTGKPN…SKTFFGLYKL (137 aa)) constitute a THD domain. A glycan (N-linked (GlcNAc...) asparagine) is linked at asparagine 185. A disulfide bond links cysteine 203 and cysteine 234. 2 N-linked (GlcNAc...) asparagine glycosylation sites follow: asparagine 251 and asparagine 261.

It belongs to the tumor necrosis factor family. Homotrimer. Interacts with ARHGAP9, BAIAP2L1, BTK, CACNB3, CACNB4, CRK, DLG2, DNMBP, DOCK4, EPS8L3, FGR, FYB1, FYN, HCK, ITK, ITSN2, KALRN, LYN, MACC1, MIA, MPP4, MYO15A, NCF1, NCK1, NCK2, NCKIPSD, OSTF1, PIK3R1, PSTPIP1, RIMBP3C, SAMSN1, SH3GL3, SH3PXD2B, SH3PXD2A, SH3RF2, SKAP2, SNX33, SNX9, SORBS3, SPTA1, SRC, SRGAP1, SRGAP2, SRGAP3, TEC, TJP3 and YES1. In terms of processing, the soluble form derives from the membrane form by proteolytic processing. The membrane-bound form undergoes two successive intramembrane proteolytic cleavages. The first one is processed by ADAM10 producing an N-terminal fragment, which lacks the receptor-binding extracellular domain. This ADAM10-processed FasL (FasL APL) remnant form is still membrane anchored and further processed by SPPL2A that liberates the FasL intracellular domain (FasL ICD). FasL shedding by ADAM10 is a prerequisite for subsequent intramembrane cleavage by SPPL2A in T-cells. Post-translationally, phosphorylated by FGR on tyrosine residues; this is required for ubiquitination and subsequent internalization. N-glycosylated. Glycosylation enhances apoptotic activity. In terms of processing, monoubiquitinated.

The protein localises to the cell membrane. It is found in the cytoplasmic vesicle lumen. The protein resides in the lysosome lumen. Its subcellular location is the secreted. It localises to the nucleus. Its function is as follows. Cytokine that binds to TNFRSF6/FAS, a receptor that transduces the apoptotic signal into cells. Involved in cytotoxic T-cell-mediated apoptosis, natural killer cell-mediated apoptosis and in T-cell development. Initiates fratricidal/suicidal activation-induced cell death (AICD) in antigen-activated T-cells contributing to the termination of immune responses. TNFRSF6/FAS-mediated apoptosis also has a role in the induction of peripheral tolerance. Binds to TNFRSF6B/DcR3, a decoy receptor that blocks apoptosis. Induces FAS-mediated activation of NF-kappa-B, initiating non-apoptotic signaling pathways. Can induce apoptosis but does not appear to be essential for this process. In terms of biological role, cytoplasmic form induces gene transcription inhibition. The protein is Tumor necrosis factor ligand superfamily member 6 (FASLG) of Sus scrofa (Pig).